We begin with the raw amino-acid sequence, 239 residues long: Small ribosomal subunit protein uS2 (239 aa).

Belongs to the universal ribosomal protein uS2 family.

In Francisella tularensis subsp. holarctica (strain FTNF002-00 / FTA), this protein is Small ribosomal subunit protein uS2.